The chain runs to 450 residues: UDP-N-acetylmuramoylalanine--D-glutamate ligase (450 aa).

An ATP-binding site is contributed by 115-121 (GTNGKST).

This sequence belongs to the MurCDEF family.

It is found in the cytoplasm. The catalysed reaction is UDP-N-acetyl-alpha-D-muramoyl-L-alanine + D-glutamate + ATP = UDP-N-acetyl-alpha-D-muramoyl-L-alanyl-D-glutamate + ADP + phosphate + H(+). It functions in the pathway cell wall biogenesis; peptidoglycan biosynthesis. Functionally, cell wall formation. Catalyzes the addition of glutamate to the nucleotide precursor UDP-N-acetylmuramoyl-L-alanine (UMA). This Syntrophotalea carbinolica (strain DSM 2380 / NBRC 103641 / GraBd1) (Pelobacter carbinolicus) protein is UDP-N-acetylmuramoylalanine--D-glutamate ligase.